Consider the following 191-residue polypeptide: Chromobox protein homolog 5 (191 aa).

The tract at residues 1-21 (MGKKTKRTADSSSSEDEEEYV) is disordered. 4 positions are modified to phosphoserine: Ser-11, Ser-12, Ser-13, and Ser-14. Residues 20–78 (YVVEKVLDRRMVKGQVEYLLKWKGFSEEHNTWEPEKNLDCPELISEFMKKYKKMKEGEN) form the Chromo 1 domain. Residue Lys-32 forms a Glycyl lysine isopeptide (Lys-Gly) (interchain with G-Cter in SUMO2) linkage. An N6-acetyllysine modification is found at Lys-40. The tract at residues 70-117 (YKKMKEGENNKPREKSEGNKRKSSFSNSADDIKSKKKREQSNDIARGF) is disordered. Over residues 73–89 (MKEGENNKPREKSEGNK) the composition is skewed to basic and acidic residues. Lys-91 is covalently cross-linked (Glycyl lysine isopeptide (Lys-Gly) (interchain with G-Cter in SUMO2)). Ser-92, Ser-93, Ser-95, and Ser-97 each carry phosphoserine. Residues Lys-102, Lys-106, Lys-154, and Lys-184 each participate in a glycyl lysine isopeptide (Lys-Gly) (interchain with G-Cter in SUMO2) cross-link. The Chromo 2; shadow subtype domain maps to 121 to 179 (LEPEKIIGATDSCGDLMFLMKWKDTDEADLVLAKEANVKCPQIVIAFYEERLTWHAYPE).

Homodimer. Interacts with histone H3 methylated at 'Lys-9'. Interacts (via Chromo 2; shadow subtype domain) with the MIS12 complex subunit NSL1; the interaction is direct, involves dimeric CBX5, and occurs during interphase. Interacts with POGZ; POGZ and PXVXL motif-containing proteins such as INCENP and TRIM28 compete for interaction with CBX5. Interacts with LRIF1 (via PxVxL motif). Interacts with INCENP. Interacts with TRIM24. Interacts (via the chromoshadow domain) with ATRX; the interaction is direct. Interacts (via the chromoshadow domain) with CHAF1A; the interaction is direct. Interacts (via the chromoshadow domain) with LBR; the interaction is direct. Interacts (via the chromoshadow domain) with NIPBL; the interaction is direct. Interacts (via the chromoshadow domain) with SP100; the interaction is direct. Interacts (via the chromoshadow domain) with STAM2; the interaction is direct. Interacts (via the chromoshadow domain) with TRIM28; the interaction is direct. Interacts (via the chromoshadow domain) with CBX3; the interaction is direct. Interacts with PRR14 (via N-terminus). Interacts with RRP1B. Interacts with HNRNPU (via C-terminus); this interaction is, at least in part, RNA-dependent. Interacts with ZNF263; recruited to the SIX3 promoter along with other proteins involved in chromatin modification and transcriptional corepression where it contributes to transcriptional repression. Interacts with AURKB during mitosis. Interacts with CHAMP1. Interacts with BAHD1. Interacts with HP1BP3. Interacts with CHD3. Interacts with CHD4. Interacts with SMYD5. Interacts with KMT5B. Interacts with KMT5C. In terms of processing, phosphorylation of HP1 and LBR may be responsible for some of the alterations in chromatin organization and nuclear structure which occur at various times during the cell cycle. Phosphorylated during interphase and possibly hyper-phosphorylated during mitosis. Post-translationally, ubiquitinated.

The protein localises to the nucleus. Its subcellular location is the chromosome. It is found in the centromere. Functionally, component of heterochromatin that recognizes and binds histone H3 tails methylated at 'Lys-9' (H3K9me), leading to epigenetic repression. In contrast, it is excluded from chromatin when 'Tyr-41' of histone H3 is phosphorylated (H3Y41ph). May contribute to the association of heterochromatin with the inner nuclear membrane by interactions with the lamin-B receptor (LBR). Involved in the formation of kinetochore through interaction with the MIS12 complex subunit NSL1. Required for the formation of the inner centromere. Its function is as follows. Component of heterochromatin that recognizes and binds histone H3 tails methylated at 'Lys-9' (H3K9me), leading to epigenetic repression. In contrast, it is excluded from chromatin when 'Tyr-41' of histone H3 is phosphorylated (H3Y41ph). Can interact with lamin-B receptor (LBR). This interaction can contribute to the association of the heterochromatin with the inner nuclear membrane. Involved in the formation of functional kinetochore through interaction with MIS12 complex proteins. This Mus musculus (Mouse) protein is Chromobox protein homolog 5 (Cbx5).